We begin with the raw amino-acid sequence, 679 residues long: Protein hook (679 aa).

The region spanning 6–123 (NEMYYSLLEW…RLLQLVLGCA (118 aa)) is the Calponin-homology (CH) domain. 2 coiled-coil regions span residues 135–437 (EIMC…LKCG) and 480–574 (QTAL…QEIL).

This sequence belongs to the hook family. As to quaternary structure, homodimer. Interacts with microtubules via its N-terminus.

The protein localises to the cytoplasm. Its subcellular location is the cytoskeleton. The protein resides in the endosome. It localises to the synapse. Involved in endocytic trafficking by stabilizing organelles of the endocytic pathway. Probably acts as a cytoskeletal linker protein required to tether endosome vesicles to the cytoskeleton. Involved in modulation of endocytosis at stages required for down-regulation of membrane proteins that control synapse size. Not involved in synaptic vesicle recycling. Required in R7 cells for boss endocytosis into multivesicular bodies (MVBs). Has a role in regulating adult longevity. The sequence is that of Protein hook from Drosophila sechellia (Fruit fly).